The following is a 295-amino-acid chain: Dipeptide transport system permease protein DppC (295 aa).

7 consecutive transmembrane segments (helical) span residues 27–47 (ALIGLIFILIVALISILAPYI), 97–117 (VFAGFIIVLLSCAFGTSLGLI), 132–152 (LIDIMLAIPNLLLTIVVVSIL), 156–178 (LANATLAIAVVSIPSYVRLTRAA), 202–222 (MFIVILPNCLAPLIVQMTMGI), 226–246 (ILELATLGFLGIGAKPPTPEL), and 262–282 (WLVTIPGLVILSLVLAFNLMG). The 190-residue stretch at 93-282 (TRISVFAGFI…SLVLAFNLMG (190 aa)) folds into the ABC transmembrane type-1 domain.

This sequence belongs to the binding-protein-dependent transport system permease family. OppBC subfamily.

The protein resides in the cell inner membrane. In terms of biological role, part of the ABC transporter DppBCDF involved in dipeptide transport. Responsible for the translocation of the substrate across the membrane. This is Dipeptide transport system permease protein DppC (dppC) from Haemophilus influenzae (strain ATCC 51907 / DSM 11121 / KW20 / Rd).